Here is a 336-residue protein sequence, read N- to C-terminus: uncharacterized protein (336 aa).

29–36 (GPKSSGKS) serves as a coordination point for ATP.

The protein belongs to the archaeal ATPase family.

This is an uncharacterized protein from Methanocaldococcus jannaschii (strain ATCC 43067 / DSM 2661 / JAL-1 / JCM 10045 / NBRC 100440) (Methanococcus jannaschii).